The primary structure comprises 404 residues: Serine/threonine-protein kinase UCN (404 aa).

In terms of domain architecture, Protein kinase spans 22-340 (LKVLKLLGKG…AAEIKEHAFF (319 aa)). Residues 28–36 (LGKGATGTV) and Lys-55 contribute to the ATP site. Asp-153 serves as the catalytic Proton acceptor. The segment at 185-207 (EFYHLSDPEPDPNPESNLSHNKK) is disordered. The region spanning 341–404 (KGVRWELLTE…CSENNPFVDF (64 aa)) is the AGC-kinase C-terminal domain.

The protein belongs to the protein kinase superfamily. AGC Ser/Thr protein kinase family. As to expression, expressed in the epidermis and cortex of the transition zone of the root apex and developing flowers. Expressed in rosette leaves, stems and siliques.

The protein resides in the cytoplasm. It localises to the nucleus. It carries out the reaction L-seryl-[protein] + ATP = O-phospho-L-seryl-[protein] + ADP + H(+). The enzyme catalyses L-threonyl-[protein] + ATP = O-phospho-L-threonyl-[protein] + ADP + H(+). Functionally, regulates planar ovule integument development by suppressing aberrantly oriented growth. Maintains planar growth of integuments by repressing the developmental regulator and transcription factor KAN4 which is involved in the control of early integument growth and polarity. Restricts growth in stamen filaments, petals, and cotyledons. The protein is Serine/threonine-protein kinase UCN of Arabidopsis thaliana (Mouse-ear cress).